Consider the following 243-residue polypeptide: UPF0246 protein SpyM3_1790 (243 aa).

This sequence belongs to the UPF0246 family.

In Streptococcus pyogenes serotype M3 (strain ATCC BAA-595 / MGAS315), this protein is UPF0246 protein SpyM3_1790.